Reading from the N-terminus, the 156-residue chain is Small ribosomal subunit protein uS7 (156 aa).

The protein belongs to the universal ribosomal protein uS7 family. In terms of assembly, part of the 30S ribosomal subunit. Contacts proteins S9 and S11.

Functionally, one of the primary rRNA binding proteins, it binds directly to 16S rRNA where it nucleates assembly of the head domain of the 30S subunit. Is located at the subunit interface close to the decoding center, probably blocks exit of the E-site tRNA. The protein is Small ribosomal subunit protein uS7 of Mesorhizobium japonicum (strain LMG 29417 / CECT 9101 / MAFF 303099) (Mesorhizobium loti (strain MAFF 303099)).